We begin with the raw amino-acid sequence, 346 residues long: Serpentine receptor class beta-11 (346 aa).

7 helical membrane passes run 26-46 (YQMI…LFKL), 57-77 (TIFI…LTTS), 102-122 (IWNF…CSVT), 139-159 (SVVM…CIIF), 186-206 (FTFF…DLIL), 239-259 (VFLI…VVFF), and 278-298 (TFST…SSFF).

This sequence belongs to the nematode receptor-like protein srb family.

The protein localises to the membrane. The chain is Serpentine receptor class beta-11 (srb-11) from Caenorhabditis elegans.